The primary structure comprises 255 residues: Homeobox protein Hox-D4 (255 aa).

A disordered region spans residues 31–128; that stretch reads EQGADYYGGG…KQPPPGTALK (98 aa). Over residues 94 to 109 the composition is skewed to pro residues; it reads EPCPAPPAPPPAPLPG. Positions 133-138 match the Antp-type hexapeptide motif; that stretch reads VYPWMK. Positions 154–213 form a DNA-binding region, homeobox; that stretch reads PKRSRTAYTRQQVLELEKEFHFNRYLTRRRRIEIAHTLCLSERQIKIWFQNRRMKWKKDH. A disordered region spans residues 212–255; sequence DHKLPNTKGRSSSSSSSSSCSSSVAPSQHLQPMAKDHHTDLTTL. Residues 222–234 show a composition bias toward low complexity; it reads SSSSSSSSSCSSS. Residues 245-255 show a composition bias toward basic and acidic residues; that stretch reads AKDHHTDLTTL.

Belongs to the Antp homeobox family. Deformed subfamily. As to quaternary structure, forms a DNA-binding heterodimer with transcription factor PBX1.

The protein resides in the nucleus. In terms of biological role, sequence-specific transcription factor which is part of a developmental regulatory system that provides cells with specific positional identities on the anterior-posterior axis. This is Homeobox protein Hox-D4 (HOXD4) from Gorilla gorilla gorilla (Western lowland gorilla).